Reading from the N-terminus, the 898-residue chain is Protein SOV1, mitochondrial (898 aa).

The N-terminal 31 residues, 1-31 (MFKYNRSLCSSALIAKSQIRFYRLKRAPLNY), are a transit peptide targeting the mitochondrion.

Its subcellular location is the mitochondrion. The protein is Protein SOV1, mitochondrial (SOV1) of Saccharomyces cerevisiae (strain ATCC 204508 / S288c) (Baker's yeast).